The following is a 208-amino-acid chain: Small ribosomal subunit protein uS4 (208 aa).

Positions 30 to 51 are disordered; that stretch reads KSSLEKRPYAPGQHGQRRSKIS. In terms of domain architecture, S4 RNA-binding spans 98-161; it reads RRLDNVVYRM…KNNPQVQRSI (64 aa).

This sequence belongs to the universal ribosomal protein uS4 family. Part of the 30S ribosomal subunit. Contacts protein S5. The interaction surface between S4 and S5 is involved in control of translational fidelity.

In terms of biological role, one of the primary rRNA binding proteins, it binds directly to 16S rRNA where it nucleates assembly of the body of the 30S subunit. Functionally, with S5 and S12 plays an important role in translational accuracy. This is Small ribosomal subunit protein uS4 from Wolinella succinogenes (strain ATCC 29543 / DSM 1740 / CCUG 13145 / JCM 31913 / LMG 7466 / NCTC 11488 / FDC 602W) (Vibrio succinogenes).